We begin with the raw amino-acid sequence, 231 residues long: Uracil-DNA glycosylase (231 aa).

The Proton acceptor role is filled by D74.

This sequence belongs to the uracil-DNA glycosylase (UDG) superfamily. UNG family.

The protein localises to the cytoplasm. The catalysed reaction is Hydrolyzes single-stranded DNA or mismatched double-stranded DNA and polynucleotides, releasing free uracil.. Functionally, excises uracil residues from the DNA which can arise as a result of misincorporation of dUMP residues by DNA polymerase or due to deamination of cytosine. This is Uracil-DNA glycosylase from Campylobacter jejuni subsp. jejuni serotype O:6 (strain 81116 / NCTC 11828).